The following is a 353-amino-acid chain: Photosystem II protein D1 (353 aa).

Residue threonine 2 is modified to N-acetylthreonine. Residue threonine 2 is modified to Phosphothreonine. 3 consecutive transmembrane segments (helical) span residues 29–46 (YIGWFGVLMIPTLLTATS), 118–133 (HFLLGVACYMGREWEL), and 142–156 (WIAVAYSAPVAAATA). Histidine 118 contacts chlorophyll a. Tyrosine 126 provides a ligand contact to pheophytin a. Aspartate 170 and glutamate 189 together coordinate [CaMn4O5] cluster. A helical membrane pass occupies residues 197–218 (FHMLGVAGVFGSSLFSAMHGSL). Histidine 198 contacts chlorophyll a. A quinone contacts are provided by residues histidine 215 and 264–265 (SF). Histidine 215 lines the Fe cation pocket. Histidine 272 is a binding site for Fe cation. The helical transmembrane segment at 274–288 (FLAAWPVVGIWFTAL) threads the bilayer. [CaMn4O5] cluster contacts are provided by histidine 332, glutamate 333, aspartate 342, and alanine 344. Residues 345–353 (AMEAPSVNG) constitute a propeptide that is removed on maturation.

It belongs to the reaction center PufL/M/PsbA/D family. As to quaternary structure, PSII is composed of 1 copy each of membrane proteins PsbA, PsbB, PsbC, PsbD, PsbE, PsbF, PsbH, PsbI, PsbJ, PsbK, PsbL, PsbM, PsbT, PsbX, PsbY, PsbZ, Psb30/Ycf12, at least 3 peripheral proteins of the oxygen-evolving complex and a large number of cofactors. It forms dimeric complexes. It depends on The D1/D2 heterodimer binds P680, chlorophylls that are the primary electron donor of PSII, and subsequent electron acceptors. It shares a non-heme iron and each subunit binds pheophytin, quinone, additional chlorophylls, carotenoids and lipids. D1 provides most of the ligands for the Mn4-Ca-O5 cluster of the oxygen-evolving complex (OEC). There is also a Cl(-1) ion associated with D1 and D2, which is required for oxygen evolution. The PSII complex binds additional chlorophylls, carotenoids and specific lipids. as a cofactor. Tyr-161 forms a radical intermediate that is referred to as redox-active TyrZ, YZ or Y-Z. In terms of processing, C-terminally processed by CTPA; processing is essential to allow assembly of the oxygen-evolving complex and thus photosynthetic growth.

It is found in the plastid. The protein localises to the chloroplast thylakoid membrane. It catalyses the reaction 2 a plastoquinone + 4 hnu + 2 H2O = 2 a plastoquinol + O2. Photosystem II (PSII) is a light-driven water:plastoquinone oxidoreductase that uses light energy to abstract electrons from H(2)O, generating O(2) and a proton gradient subsequently used for ATP formation. It consists of a core antenna complex that captures photons, and an electron transfer chain that converts photonic excitation into a charge separation. The D1/D2 (PsbA/PsbD) reaction center heterodimer binds P680, the primary electron donor of PSII as well as several subsequent electron acceptors. This chain is Photosystem II protein D1, found in Vigna unguiculata (Cowpea).